The primary structure comprises 329 residues: GTP 3',8-cyclase (329 aa).

The Radical SAM core domain maps to 8-234 (AFARKYYYLR…QLRQRSDGPA (227 aa)). Arg-17 contacts GTP. Positions 24 and 28 each coordinate [4Fe-4S] cluster. Tyr-30 lines the S-adenosyl-L-methionine pocket. Cys-31 serves as a coordination point for [4Fe-4S] cluster. Arg-68 contributes to the GTP binding site. S-adenosyl-L-methionine is bound at residue Gly-72. Thr-99 lines the GTP pocket. Ser-123 lines the S-adenosyl-L-methionine pocket. Lys-160 contacts GTP. An S-adenosyl-L-methionine-binding site is contributed by Met-194. [4Fe-4S] cluster-binding residues include Cys-257 and Cys-260. Residue 262 to 264 (RLR) coordinates GTP. Cys-274 contributes to the [4Fe-4S] cluster binding site.

It belongs to the radical SAM superfamily. MoaA family. In terms of assembly, monomer and homodimer. The cofactor is [4Fe-4S] cluster.

It catalyses the reaction GTP + AH2 + S-adenosyl-L-methionine = (8S)-3',8-cyclo-7,8-dihydroguanosine 5'-triphosphate + 5'-deoxyadenosine + L-methionine + A + H(+). Its pathway is cofactor biosynthesis; molybdopterin biosynthesis. Catalyzes the cyclization of GTP to (8S)-3',8-cyclo-7,8-dihydroguanosine 5'-triphosphate. The polypeptide is GTP 3',8-cyclase (Escherichia coli O17:K52:H18 (strain UMN026 / ExPEC)).